Here is a 442-residue protein sequence, read N- to C-terminus: D-serine dehydratase (442 aa).

K118 is subject to N6-(pyridoxal phosphate)lysine.

Belongs to the serine/threonine dehydratase family. DsdA subfamily. Monomer. Pyridoxal 5'-phosphate is required as a cofactor.

It carries out the reaction D-serine = pyruvate + NH4(+). In Escherichia coli O81 (strain ED1a), this protein is D-serine dehydratase.